A 103-amino-acid chain; its full sequence is uncharacterized protein (103 aa).

The first 22 residues, 1–22, serve as a signal peptide directing secretion; that stretch reads MFRPFLNSLMLGSLFFPFIAIA.

The protein to the N-terminal of the FimA/PapA family of fimbria proteins.

This is an uncharacterized protein from Escherichia coli (strain K12).